Reading from the N-terminus, the 280-residue chain is 4-hydroxy-3-methylbut-2-enyl diphosphate reductase (280 aa).

Cys12 is a [4Fe-4S] cluster binding site. (2E)-4-hydroxy-3-methylbut-2-enyl diphosphate contacts are provided by His40 and His72. Dimethylallyl diphosphate-binding residues include His40 and His72. His40 and His72 together coordinate isopentenyl diphosphate. Residue Cys94 coordinates [4Fe-4S] cluster. His122 lines the (2E)-4-hydroxy-3-methylbut-2-enyl diphosphate pocket. Dimethylallyl diphosphate is bound at residue His122. Residue His122 participates in isopentenyl diphosphate binding. Glu124 acts as the Proton donor in catalysis. Thr160 is a (2E)-4-hydroxy-3-methylbut-2-enyl diphosphate binding site. Cys188 contacts [4Fe-4S] cluster. Residues Ser216, Asn218, and Ser260 each contribute to the (2E)-4-hydroxy-3-methylbut-2-enyl diphosphate site. 3 residues coordinate dimethylallyl diphosphate: Ser216, Asn218, and Ser260. Isopentenyl diphosphate is bound by residues Ser216, Asn218, and Ser260.

This sequence belongs to the IspH family. Requires [4Fe-4S] cluster as cofactor.

The enzyme catalyses isopentenyl diphosphate + 2 oxidized [2Fe-2S]-[ferredoxin] + H2O = (2E)-4-hydroxy-3-methylbut-2-enyl diphosphate + 2 reduced [2Fe-2S]-[ferredoxin] + 2 H(+). It catalyses the reaction dimethylallyl diphosphate + 2 oxidized [2Fe-2S]-[ferredoxin] + H2O = (2E)-4-hydroxy-3-methylbut-2-enyl diphosphate + 2 reduced [2Fe-2S]-[ferredoxin] + 2 H(+). Its pathway is isoprenoid biosynthesis; dimethylallyl diphosphate biosynthesis; dimethylallyl diphosphate from (2E)-4-hydroxy-3-methylbutenyl diphosphate: step 1/1. The protein operates within isoprenoid biosynthesis; isopentenyl diphosphate biosynthesis via DXP pathway; isopentenyl diphosphate from 1-deoxy-D-xylulose 5-phosphate: step 6/6. Its function is as follows. Catalyzes the conversion of 1-hydroxy-2-methyl-2-(E)-butenyl 4-diphosphate (HMBPP) into a mixture of isopentenyl diphosphate (IPP) and dimethylallyl diphosphate (DMAPP). Acts in the terminal step of the DOXP/MEP pathway for isoprenoid precursor biosynthesis. The chain is 4-hydroxy-3-methylbut-2-enyl diphosphate reductase from Pelobacter propionicus (strain DSM 2379 / NBRC 103807 / OttBd1).